Here is an 89-residue protein sequence, read N- to C-terminus: Small ribosomal subunit protein uS15 (89 aa).

The protein belongs to the universal ribosomal protein uS15 family. As to quaternary structure, part of the 30S ribosomal subunit. Forms a bridge to the 50S subunit in the 70S ribosome, contacting the 23S rRNA.

In terms of biological role, one of the primary rRNA binding proteins, it binds directly to 16S rRNA where it helps nucleate assembly of the platform of the 30S subunit by binding and bridging several RNA helices of the 16S rRNA. Forms an intersubunit bridge (bridge B4) with the 23S rRNA of the 50S subunit in the ribosome. In Frankia alni (strain DSM 45986 / CECT 9034 / ACN14a), this protein is Small ribosomal subunit protein uS15.